A 1342-amino-acid polypeptide reads, in one-letter code: WD repeat-containing protein 19 (1342 aa).

WD repeat units follow at residues 11-51, 52-92, 95-134, 137-175, 273-311, and 317-356; these read TWLG…RSEI, NLPG…TSQL, GMRD…KIPV, KHTK…IRQT, NHKD…DMYV, and EENK…LGDA. TPR repeat units follow at residues 736–769, 775–808, 840–873, 895–928, 951–984, and 1020–1053; these read AQDL…AKHL, PFIS…DNKE, RVLK…DKAA, PKIH…QSVI, LDGA…NEAF, and EKRY…EDNV.

Component of the IFT complex A (IFT-A) complex. IFT-A complex is divided into a core subcomplex composed of IFT122:IFT140:WDR19 which is associated with TULP3 and a peripheral subcomplex composed of IFT43:WDR35:TTC21B. Interacts (via C-terminal region) with IFT122 (via C-terminal region). Interacts with BBS1. Interacts with TTC25. In terms of tissue distribution, some isoforms are tissue-specific. Highly expressed in the prostate. Lower expression in the cerebellum, pituitary gland, fetal lung, and pancreas. In normal prostate, expressed in both basal and luminal epithelial cells. No expression detected in fibromuscular stromal cells, endothelial cells, or infiltrating lymphocytes. Uniformed expression in prostate adenocarcinoma cells.

Its subcellular location is the cell projection. The protein localises to the cilium. It localises to the cytoplasm. The protein resides in the cytoskeleton. It is found in the cilium basal body. Its subcellular location is the photoreceptor outer segment. The protein localises to the flagellum. Its function is as follows. As component of the IFT complex A (IFT-A), a complex required for retrograde ciliary transport and entry into cilia of G protein-coupled receptors (GPCRs), it is involved in cilia function and/or assembly. Essential for functional IFT-A assembly and ciliary entry of GPCRs. Associates with the BBSome complex to mediate ciliary transport. This chain is WD repeat-containing protein 19, found in Homo sapiens (Human).